Consider the following 331-residue polypeptide: D/L-glyceraldehyde reductase (331 aa).

Catalysis depends on tyrosine 51, which acts as the Proton donor. Histidine 114 lines the substrate pocket. 213-276 (SAFGNNTKGL…SVTKARIAEN (64 aa)) provides a ligand contact to NADP(+).

Belongs to the aldo/keto reductase family.

The enzyme catalyses glycerol + NADP(+) = L-glyceraldehyde + NADPH + H(+). It catalyses the reaction glycerol + NADP(+) = D-glyceraldehyde + NADPH + H(+). It participates in carbohydrate acid metabolism. Functionally, mediates the conversion of L-glyceraldehyde to glycerol in D-galacturonate catabolic process. Also able to reduce D-glyceraldehyde. The chain is D/L-glyceraldehyde reductase (gld1) from Hypocrea jecorina (Trichoderma reesei).